The following is a 330-amino-acid chain: MLLFLVFILVVSQVVLLLLSPQFRDKFIFRWYYDEVYKPMILDNSRYRIKFYVVPVFYLSVYSYMVYIFYSRTFAIISPMLTSIETYVVIPLMLILPLFFGSMSMIIKPDSSNAHQIGSEKRYPYDNLLYFPQHECRTCKQVKPARSKHCTVCNSCIYLADHHCVWINNCVGMGNYMYFYSFLCSNLLLLSYSFIRLIFIQFNKSAYNTTPTGEKSLLILSILCGSFTVILAVYCYFVFELVNSGMTTNEKDKWQMVHDYINTGDLVRDPEGKYFIKYQNGGNNYEFYSTDSYDGTQYTIVDYFTVKSPAEITNIYDKGNFINNLREFIG.

Residues 1–21 (MLLFLVFILVVSQVVLLLLSP) form a helical membrane-spanning segment. The Cytoplasmic portion of the chain corresponds to 22–50 (QFRDKFIFRWYYDEVYKPMILDNSRYRIK). Residues 51–71 (FYVVPVFYLSVYSYMVYIFYS) traverse the membrane as a helical segment. Residues 72–86 (RTFAIISPMLTSIET) are Lumenal-facing. Residues 87 to 107 (YVVIPLMLILPLFFGSMSMII) traverse the membrane as a helical segment. Residues 108-181 (KPDSSNAHQI…GMGNYMYFYS (74 aa)) are Cytoplasmic-facing. The region spanning 134–184 (HECRTCKQVKPARSKHCTVCNSCIYLADHHCVWINNCVGMGNYMYFYSFLC) is the DHHC domain. A helical membrane pass occupies residues 182–202 (FLCSNLLLLSYSFIRLIFIQF). The Lumenal portion of the chain corresponds to 203–218 (NKSAYNTTPTGEKSLL). The chain crosses the membrane as a helical span at residues 219–239 (ILSILCGSFTVILAVYCYFVF). Over 240–330 (ELVNSGMTTN…FINNLREFIG (91 aa)) the chain is Cytoplasmic.

This sequence belongs to the DHHC palmitoyltransferase family. SWF1 subfamily.

It is found in the endoplasmic reticulum membrane. The enzyme catalyses L-cysteinyl-[protein] + hexadecanoyl-CoA = S-hexadecanoyl-L-cysteinyl-[protein] + CoA. Palmitoyltransferase that targets several endosomal SNAREs. Palmitoylates the SNAREs at cysteine residues close to the cytoplasmic end of their transmembrane domain. May have a role in the cellular quality control of transmembrane domain-containing proteins. This chain is Palmitoyltransferase SWF1 (SWF1), found in Candida glabrata (strain ATCC 2001 / BCRC 20586 / JCM 3761 / NBRC 0622 / NRRL Y-65 / CBS 138) (Yeast).